Reading from the N-terminus, the 260-residue chain is Methionine-rich nacre protein (260 aa).

The first 19 residues, 1 to 19 (MRRILCLAVVIFIINDVSS), serve as a signal peptide directing secretion. The segment at 23–75 (GSNKNWKKSGMSLSSPGNKKPTGNNNAVPQKSKMNNVNQNSLSQPKRPSHPGN) is disordered. A compositionally biased stretch (polar residues) spans 33–68 (MSLSSPGNKKPTGNNNAVPQKSKMNNVNQNSLSQPK).

As to expression, expressed in mantle distal zone, mantle margin and grafted pearl pockets. Not expressed in adductor muscle, gills, hemocytes or ungrafted pearl pockets. Within the mantle, specifically expressed in mineralizing outer epithelium cells (at protein level). After secretion incorporated into acid-insoluble nacre matrix of shell and pearl (at protein level). Not found in acid-insoluble matrix of shell prisms (at protein level).

It localises to the secreted. In Margaritifera margaritifera (Freshwater pearl mussel), this protein is Methionine-rich nacre protein.